Reading from the N-terminus, the 369-residue chain is Histidinol-phosphate aminotransferase (369 aa).

Lys223 bears the N6-(pyridoxal phosphate)lysine mark.

The protein belongs to the class-II pyridoxal-phosphate-dependent aminotransferase family. Histidinol-phosphate aminotransferase subfamily. Homodimer. Pyridoxal 5'-phosphate is required as a cofactor.

It carries out the reaction L-histidinol phosphate + 2-oxoglutarate = 3-(imidazol-4-yl)-2-oxopropyl phosphate + L-glutamate. It functions in the pathway amino-acid biosynthesis; L-histidine biosynthesis; L-histidine from 5-phospho-alpha-D-ribose 1-diphosphate: step 7/9. Catalyzes the conversion of imidazole acetol phosphate to histidinol phosphate. Can also transaminate aromatic amino acids and histidine in addition to histidinol phosphate. This is Histidinol-phosphate aminotransferase from Zymomonas mobilis subsp. mobilis (strain ATCC 31821 / ZM4 / CP4).